An 860-amino-acid polypeptide reads, in one-letter code: Transcription factor E2F8 (860 aa).

Disordered regions lie at residues 1 to 27 and 38 to 57; these read MENQKENLFSEPHKRGLMKSPLHPSSK and DLGPLTTPTKPKEVSQGEPW. Residues Ser-71 and Ser-102 each carry the phosphoserine modification. 2 consecutive DNA-binding regions follow at residues 113 to 182 and 261 to 347; these read RKEK…TWHG and RKDK…KWTG. Disordered regions lie at residues 407-433, 532-616, and 745-803; these read RRKISSAPSSPVKSNKAESSQNSPPVP, LTPP…PKED, and QMSA…QPVP. Phosphoserine occurs at positions 412 and 416. 2 stretches are compositionally biased toward polar residues: residues 412–429 and 542–554; these read SAPSSPVKSNKAESSQNS and VCPTQPSNATGSK. The span at 555-565 shows a compositional bias: basic and acidic residues; it reads DPTDAPAEKTA.

It belongs to the E2F/DP family. Interacts with HIF1A. Homodimer and heterodimer: mainly forms homodimers and, to a lesser extent, heterodimers with E2F8. Dimerization is important for DNA-binding. Highly expressed in liver, skin, thymus and testis. Expressed in trophoblast giant cells throughout placenta development (at protein level).

It localises to the nucleus. Atypical E2F transcription factor that participates in various processes such as angiogenesis and polyploidization of specialized cells. Mainly acts as a transcription repressor that binds DNA independently of DP proteins and specifically recognizes the E2 recognition site 5'-TTTC[CG]CGC-3'. Directly represses transcription of classical E2F transcription factors such as E2F1: component of a feedback loop in S phase by repressing the expression of E2F1, thereby preventing p53/TP53-dependent apoptosis. Plays a key role in polyploidization of cells in placenta and liver by regulating the endocycle, probably by repressing genes promoting cytokinesis and antagonizing action of classical E2F proteins (E2F1, E2F2 and/or E2F3). Required for placental development by promoting polyploidization of trophoblast giant cells. Acts as a promoter of sprouting angiogenesis, possibly by acting as a transcription activator: associates with HIF1A, recognizes and binds the VEGFA promoter, which is different from canonical E2 recognition site, and activates expression of the VEGFA gene. In Mus musculus (Mouse), this protein is Transcription factor E2F8 (E2f8).